We begin with the raw amino-acid sequence, 416 residues long: 3-isopropylmalate dehydratase large subunit 2 (416 aa).

The [4Fe-4S] cluster site is built by cysteine 296, cysteine 356, and cysteine 359.

Belongs to the aconitase/IPM isomerase family. LeuC type 2 subfamily. In terms of assembly, heterodimer of LeuC and LeuD. The cofactor is [4Fe-4S] cluster.

The enzyme catalyses (2R,3S)-3-isopropylmalate = (2S)-2-isopropylmalate. It functions in the pathway amino-acid biosynthesis; L-leucine biosynthesis; L-leucine from 3-methyl-2-oxobutanoate: step 2/4. In terms of biological role, catalyzes the isomerization between 2-isopropylmalate and 3-isopropylmalate, via the formation of 2-isopropylmaleate. The sequence is that of 3-isopropylmalate dehydratase large subunit 2 from Archaeoglobus fulgidus (strain ATCC 49558 / DSM 4304 / JCM 9628 / NBRC 100126 / VC-16).